A 415-amino-acid polypeptide reads, in one-letter code: Levansucrase (415 aa).

5 residues coordinate sucrose: W45, D46, A132, R202, and D203. Residue D46 is the Nucleophile of the active site. The active-site Proton donor/acceptor is E287.

Belongs to the glycosyl hydrolase 68 family.

The enzyme catalyses [6)-beta-D-fructofuranosyl-(2-&gt;](n) alpha-D-glucopyranoside + sucrose = [6)-beta-D-fructofuranosyl-(2-&gt;](n+1) alpha-D-glucopyranoside + D-glucose. Functionally, catalyzes the synthesis of levan, a fructose polymer, by transferring the fructosyl moiety from sucrose to a growing acceptor molecule. The polypeptide is Levansucrase (Rahnella aquatilis (strain ATCC 33071 / DSM 4594 / JCM 1683 / NBRC 105701 / NCIMB 13365 / CIP 78.65)).